We begin with the raw amino-acid sequence, 313 residues long: Ribosomal RNA small subunit methyltransferase H (313 aa).

Residues 35–37 (GGH), aspartate 55, phenylalanine 81, aspartate 103, and glutamine 110 contribute to the S-adenosyl-L-methionine site.

It belongs to the methyltransferase superfamily. RsmH family.

The protein resides in the cytoplasm. It catalyses the reaction cytidine(1402) in 16S rRNA + S-adenosyl-L-methionine = N(4)-methylcytidine(1402) in 16S rRNA + S-adenosyl-L-homocysteine + H(+). Specifically methylates the N4 position of cytidine in position 1402 (C1402) of 16S rRNA. The chain is Ribosomal RNA small subunit methyltransferase H from Pseudomonas aeruginosa (strain UCBPP-PA14).